We begin with the raw amino-acid sequence, 498 residues long: Glutathione synthetase large chain (498 aa).

Substrate is bound at residue arginine 128. Residue glutamate 146 participates in ATP binding. The Mg(2+) site is built by glutamate 146 and asparagine 148. Residues 150-153 (ISVS), 233-235 (ERN), glutamine 239, and 291-294 (RVGY) contribute to the substrate site. An ATP-binding site is contributed by lysine 330. Position 356 is a phosphoserine (serine 356). Residues 387 to 396 (KPQREGGGNN), tyrosine 398, 420 to 423 (MRYI), and glutamate 446 contribute to the ATP site. A Mg(2+)-binding site is contributed by glutamate 391. Arginine 473 is a substrate binding site. ATP-binding residues include lysine 475 and glutamate 481. 484–485 (VA) contacts substrate.

Belongs to the eukaryotic GSH synthase family. Heterodimer composed of a large and a small chain. Mg(2+) serves as cofactor.

The enzyme catalyses gamma-L-glutamyl-L-cysteine + glycine + ATP = glutathione + ADP + phosphate + H(+). The protein operates within sulfur metabolism; glutathione biosynthesis; glutathione from L-cysteine and L-glutamate: step 2/2. In Schizosaccharomyces pombe (strain 972 / ATCC 24843) (Fission yeast), this protein is Glutathione synthetase large chain (gsa1).